The primary structure comprises 262 residues: Thiazole synthase (262 aa).

Lysine 104 acts as the Schiff-base intermediate with DXP in catalysis. Residues glycine 165, 191–192 (AG), and 213–214 (NT) each bind 1-deoxy-D-xylulose 5-phosphate.

It belongs to the ThiG family. In terms of assembly, homotetramer. Forms heterodimers with either ThiH or ThiS.

It is found in the cytoplasm. It carries out the reaction [ThiS sulfur-carrier protein]-C-terminal-Gly-aminoethanethioate + 2-iminoacetate + 1-deoxy-D-xylulose 5-phosphate = [ThiS sulfur-carrier protein]-C-terminal Gly-Gly + 2-[(2R,5Z)-2-carboxy-4-methylthiazol-5(2H)-ylidene]ethyl phosphate + 2 H2O + H(+). It participates in cofactor biosynthesis; thiamine diphosphate biosynthesis. Catalyzes the rearrangement of 1-deoxy-D-xylulose 5-phosphate (DXP) to produce the thiazole phosphate moiety of thiamine. Sulfur is provided by the thiocarboxylate moiety of the carrier protein ThiS. In vitro, sulfur can be provided by H(2)S. The sequence is that of Thiazole synthase from Alkalilimnicola ehrlichii (strain ATCC BAA-1101 / DSM 17681 / MLHE-1).